We begin with the raw amino-acid sequence, 202 residues long: MKALTTRQQEVYDLVRDHLAQTGMPPTRAEIAQRLGFRSPNAAEEHLKALARKGVIEIVSGASRGIRLLMEEEEGLPLIGRVAAGEPLLAQQHIEGHYKVDPSLFKPGADFLLRVNGMSMRDIGILDGDLLAVHKTQDVRNGQVVVARIDDEVTVKRLKKQGNIVHLLPENSEFQPIVVDLREQSFTIEGLAVGVIRNGDWI.

Positions 28 to 48 form a DNA-binding region, H-T-H motif; it reads RAEIAQRLGFRSPNAAEEHLK. Residues Ser-119 and Lys-156 each act as for autocatalytic cleavage activity in the active site.

It belongs to the peptidase S24 family. As to quaternary structure, homodimer.

The catalysed reaction is Hydrolysis of Ala-|-Gly bond in repressor LexA.. Represses a number of genes involved in the response to DNA damage (SOS response), including recA and lexA. Binds to the 16 bp palindromic sequence 5'-CTGTATATATATACAG-3'. In the presence of single-stranded DNA, RecA interacts with LexA causing an autocatalytic cleavage which disrupts the DNA-binding part of LexA, leading to derepression of the SOS regulon and eventually DNA repair. The protein is LexA repressor of Yersinia pseudotuberculosis serotype O:1b (strain IP 31758).